The chain runs to 316 residues: MRMAVTQNPWQGRVDSGEVGDTTRLFRIVNTLESSEAKTLGGSPVLLGFGCDAGVLRNQGRAGAAHGPDAIRQALANVPAHGLPALYDAGNIACEHGDLESAQLALAGSVHNILSRGGFPLVLGGGHEVAWGTWQGLRAHLDARNDDGRLLIINIDAHFDLRTSRPASSGTPFDQIANACAERGQPFDYVCLGVSRLSNTPALFSRAHALGVSYVEDVDMQERHLASRLAELAARIDATDHVYLTIDLDALPATVMPGVSAPAAYGVPLPVVEEIALLARRSGKLRAADLAEYNPQYDRDNLGARVAARLAWRLLG.

Residues H127, D156, H158, D160, D247, and D249 each coordinate Mn(2+).

Belongs to the arginase family. Mn(2+) serves as cofactor.

It carries out the reaction N-formimidoyl-L-glutamate + H2O = formamide + L-glutamate. Its pathway is amino-acid degradation; L-histidine degradation into L-glutamate; L-glutamate from N-formimidoyl-L-glutamate (hydrolase route): step 1/1. Catalyzes the conversion of N-formimidoyl-L-glutamate to L-glutamate and formamide. The polypeptide is Formimidoylglutamase (Cupriavidus pinatubonensis (strain JMP 134 / LMG 1197) (Cupriavidus necator (strain JMP 134))).